The sequence spans 261 residues: Homeobox protein engrailed-2b (261 aa).

3 stretches are compositionally biased toward basic and acidic residues: residues 1–21 (MEEN…DESN), 53–72 (GRRK…RENR), and 100–116 (KKTD…RAET). 3 disordered regions span residues 1 to 24 (MEEN…NRAI), 53 to 125 (GRRK…SSDS), and 152 to 176 (DRPS…KRPR). The homeobox DNA-binding region spans 172 to 231 (DKRPRTAFTAEQLQRLKNEFQNNRYLTEQRRQALAQELGLNESQIKIWFQNKRAKIKKAT).

Belongs to the engrailed homeobox family.

It localises to the nucleus. The chain is Homeobox protein engrailed-2b (eng2b) from Danio rerio (Zebrafish).